The following is a 295-amino-acid chain: Vesicle-associated protein 4-2 (295 aa).

Positions 1–10 are enriched in basic and acidic residues; the sequence is MTMTEEKPTS. The tract at residues 1 to 99 is disordered; sequence MTMTEEKPTS…PSPSVSSVAK (99 aa). A compositionally biased stretch (low complexity) spans 31-53; the sequence is NAASSAATSPFPSGASSSSTSSH. Positions 54-71 are enriched in basic residues; sequence LHNHHQHHHQHHHQHHHQ. The segment covering 83-98 has biased composition (polar residues); that stretch reads GQNQHPTPSPSVSSVA. The MSP domain occupies 107–229; sequence RLKLDPSEKL…KEQILRVIFL (123 aa). The segment covering 249 to 263 has biased composition (basic and acidic residues); it reads DAAVEARKKPPEETG. The segment at 249 to 270 is disordered; the sequence is DAAVEARKKPPEETGPKMIGEG. Ser294 carries the phosphoserine modification.

The protein belongs to the VAMP-associated protein (VAP) (TC 9.B.17) family.

Its function is as follows. May play a role in vesicle trafficking. The polypeptide is Vesicle-associated protein 4-2 (PVA42) (Arabidopsis thaliana (Mouse-ear cress)).